Here is a 154-residue protein sequence, read N- to C-terminus: uncharacterized protein (154 aa).

Disordered stretches follow at residues 23 to 63 and 79 to 154; these read ERVG…VVLK and IKAA…DENE. Over residues 43 to 56 the composition is skewed to acidic residues; it reads PDEDGDHSDKEDEQ. S50 is subject to Phosphoserine. An N6-acetyllysine modification is found at K108. Phosphoserine is present on S146.

This is an uncharacterized protein from Homo sapiens (Human).